Here is a 264-residue protein sequence, read N- to C-terminus: Thymidylate synthase (264 aa).

Arginine 21 provides a ligand contact to dUMP. Histidine 51 contacts (6R)-5,10-methylene-5,6,7,8-tetrahydrofolate. Position 126–127 (126–127 (RR)) interacts with dUMP. The active-site Nucleophile is the cysteine 146. DUMP-binding positions include 166–169 (RSCD), asparagine 177, and 207–209 (HLY). Aspartate 169 contributes to the (6R)-5,10-methylene-5,6,7,8-tetrahydrofolate binding site. Residue alanine 263 coordinates (6R)-5,10-methylene-5,6,7,8-tetrahydrofolate.

It belongs to the thymidylate synthase family. Bacterial-type ThyA subfamily. In terms of assembly, homodimer.

Its subcellular location is the cytoplasm. The catalysed reaction is dUMP + (6R)-5,10-methylene-5,6,7,8-tetrahydrofolate = 7,8-dihydrofolate + dTMP. It participates in pyrimidine metabolism; dTTP biosynthesis. Catalyzes the reductive methylation of 2'-deoxyuridine-5'-monophosphate (dUMP) to 2'-deoxythymidine-5'-monophosphate (dTMP) while utilizing 5,10-methylenetetrahydrofolate (mTHF) as the methyl donor and reductant in the reaction, yielding dihydrofolate (DHF) as a by-product. This enzymatic reaction provides an intracellular de novo source of dTMP, an essential precursor for DNA biosynthesis. This is Thymidylate synthase from Escherichia fergusonii (strain ATCC 35469 / DSM 13698 / CCUG 18766 / IAM 14443 / JCM 21226 / LMG 7866 / NBRC 102419 / NCTC 12128 / CDC 0568-73).